Reading from the N-terminus, the 175-residue chain is Transcriptional repressor NrdR (175 aa).

Residues 3 to 32 (CPYCSHPDSKVIDSRDVDDGVRRRRECVVC) fold into a zinc finger. Residues 47-137 (LFVVKKDQRR…VYREFTDITQ (91 aa)) form the ATP-cone domain.

It belongs to the NrdR family. Requires Zn(2+) as cofactor.

Its function is as follows. Negatively regulates transcription of bacterial ribonucleotide reductase nrd genes and operons by binding to NrdR-boxes. The sequence is that of Transcriptional repressor NrdR from Dehalococcoides mccartyi (strain CBDB1).